A 360-amino-acid chain; its full sequence is Phospho-N-acetylmuramoyl-pentapeptide-transferase (360 aa).

Transmembrane regions (helical) follow at residues 21 to 41, 73 to 93, 94 to 114, 132 to 152, 168 to 188, 199 to 219, 239 to 259, 263 to 283, 288 to 308, and 338 to 358; these read YLSF…LWMG, TMGG…WADL, TNPY…VGFV, WKYF…YAHG, VMPQ…VGTS, GLAI…AWAT, LVVV…FNTY, VFMG…IAVL, FVLV…ILQV, and VIVR…ATLK.

Belongs to the glycosyltransferase 4 family. MraY subfamily. It depends on Mg(2+) as a cofactor.

It is found in the cell inner membrane. It catalyses the reaction UDP-N-acetyl-alpha-D-muramoyl-L-alanyl-gamma-D-glutamyl-meso-2,6-diaminopimeloyl-D-alanyl-D-alanine + di-trans,octa-cis-undecaprenyl phosphate = di-trans,octa-cis-undecaprenyl diphospho-N-acetyl-alpha-D-muramoyl-L-alanyl-D-glutamyl-meso-2,6-diaminopimeloyl-D-alanyl-D-alanine + UMP. The protein operates within cell wall biogenesis; peptidoglycan biosynthesis. In terms of biological role, catalyzes the initial step of the lipid cycle reactions in the biosynthesis of the cell wall peptidoglycan: transfers peptidoglycan precursor phospho-MurNAc-pentapeptide from UDP-MurNAc-pentapeptide onto the lipid carrier undecaprenyl phosphate, yielding undecaprenyl-pyrophosphoryl-MurNAc-pentapeptide, known as lipid I. This chain is Phospho-N-acetylmuramoyl-pentapeptide-transferase, found in Vibrio cholerae serotype O1 (strain M66-2).